Reading from the N-terminus, the 538-residue chain is Nectin-2 (538 aa).

An N-terminal signal peptide occupies residues 1–31 (MARAAALLPSRSPPTPLLWPLLLLLLLETGA). Residues 32–156 (QDVRVQVLPE…KGSVRGMTWL (125 aa)) enclose the Ig-like V-type domain. The Extracellular portion of the chain corresponds to 32 to 360 (QDVRVQVLPE…NTAGAGATGG (329 aa)). 3 cysteine pairs are disulfide-bonded: Cys54-Cys140, Cys183-Cys238, and Cys283-Cys329. A glycan (N-linked (GlcNAc...) asparagine) is linked at Asn137. Ig-like C2-type domains are found at residues 162 to 256 (PKNQ…VTLS) and 261 to 345 (PEVS…QVIF). N-linked (GlcNAc...) asparagine glycosylation is present at Asn324. The helical transmembrane segment at 361–381 (IIGGIIAAIIATAVAATGILI) threads the bilayer. Residues 382 to 538 (CRQQRKEQTL…GFVMSRAMYV (157 aa)) are Cytoplasmic-facing. Positions 390-414 (TLQGAEEDEDLEGPPSYKPPTPKAK) are disordered. Thr410 is modified (phosphothreonine). Phosphoserine is present on residues Ser433, Gly465, and Gly470. The segment at 462–489 (ERSGPLHPGATSLGSPIPVPPGPPAVED) is disordered.

It belongs to the nectin family. In terms of assembly, can form trans-heterodimers with NECTIN3. Interacts with CD226 or with PVRIG; these interactions are competitive and have a differential functional outcome on T-cell activation, either positive or negative, respectively. Binds with low affinity to TIGIT. (Microbial infection) Interacts with herpes simplex virus 1 (HHV-1) mutant Rid1, herpes simplex virus 1 (HHV-2) and pseudorabies virus (PRV) envelope glycoprotein D. Ubiquitous.

It is found in the cell membrane. Its function is as follows. Modulator of T-cell signaling. Can be either a costimulator of T-cell function, or a coinhibitor, depending on the receptor it binds to. Upon binding to CD226, stimulates T-cell proliferation and cytokine production, including that of IL2, IL5, IL10, IL13, and IFNG. Upon interaction with PVRIG, inhibits T-cell proliferation. These interactions are competitive. Probable cell adhesion protein. Functionally, (Microbial infection) Acts as a receptor for herpes simplex virus 1 (HHV-1) mutant Rid1, herpes simplex virus 1 (HHV-2) and pseudorabies virus (PRV). In Homo sapiens (Human), this protein is Nectin-2.